A 182-amino-acid chain; its full sequence is ATP-dependent protease subunit HslV (182 aa).

Threonine 7 is a catalytic residue. Na(+) contacts are provided by alanine 166, cysteine 169, and threonine 172.

It belongs to the peptidase T1B family. HslV subfamily. As to quaternary structure, a double ring-shaped homohexamer of HslV is capped on each side by a ring-shaped HslU homohexamer. The assembly of the HslU/HslV complex is dependent on binding of ATP.

The protein localises to the cytoplasm. It carries out the reaction ATP-dependent cleavage of peptide bonds with broad specificity.. With respect to regulation, allosterically activated by HslU binding. Its function is as follows. Protease subunit of a proteasome-like degradation complex believed to be a general protein degrading machinery. The polypeptide is ATP-dependent protease subunit HslV (Albidiferax ferrireducens (strain ATCC BAA-621 / DSM 15236 / T118) (Rhodoferax ferrireducens)).